A 902-amino-acid polypeptide reads, in one-letter code: Glutamate receptor 4 (902 aa).

Residues 1–20 (MRIISRQIVLLFSGFWGLAM) form the signal peptide. At 22–544 (AFPSSVQIGG…GVFSFLDPLA (523 aa)) the chain is on the extracellular side. N-linked (GlcNAc...) asparagine glycans are attached at residues Asn52, Asn56, Asn258, Asn371, Asn407, and Asn414. Residues Cys84 and Cys331 are joined by a disulfide bond. Residues Pro500, Thr502, and Arg507 each contribute to the L-glutamate site. The helical transmembrane segment at 545 to 565 (YEIWMCIVFAYIGVSVVLFLV) threads the bilayer. The Cytoplasmic segment spans residues 566–592 (SRFSPYEWHTEEPEDGKEGPSDQPPNE). The segment at residues 593 to 608 (FGIFNSLWFSLGAFMQ) is an intramembrane region (helical; Pore-forming). An intramembrane segment occupies 609–611 (QGC). Residue Cys611 is the site of S-palmitoyl cysteine attachment. Topologically, residues 612-617 (DISPRS) are cytoplasmic. A helical membrane pass occupies residues 618 to 638 (LSGRIVGGVWWFFTLIIISSY). Over 639 to 813 (TANLAAFLTV…DKTSALSLSN (175 aa)) the chain is Extracellular. Residues Ser676, Thr677, and Glu727 each contribute to the L-glutamate site. Cys740 and Cys795 are joined by a disulfide. The chain crosses the membrane as a helical span at residues 814-834 (VAGVFYILVGGLGLAMLVALI). Over 835 to 902 (EFCYKSRAEA…GLAVIASDLP (68 aa)) the chain is Cytoplasmic. Residue Cys837 is the site of S-palmitoyl cysteine attachment. Ser862 is subject to Phosphoserine; by PKC/PRKCG.

This sequence belongs to the glutamate-gated ion channel (TC 1.A.10.1) family. GRIA4 subfamily. Homotetramer or heterotetramer of pore-forming glutamate receptor subunits. Tetramers may be formed by the dimerization of dimers. Interacts with EPB41L1 via its C-terminus. Isoform 3 interacts with PICK1. Found in a complex with GRIA1, GRIA2, GRIA3, CNIH2, CNIH3, CACNG2, CACNG3, CACNG4, CACNG5, CACNG7 and CACNG8. Interacts with CACNG5 and PRKCG. Found in a complex with GRIA1, GRIA2, GRIA3, DLG4, CACNG8 and CNIH2. In terms of processing, palmitoylated. Depalmitoylated upon L-glutamate stimulation. ZDHHC3/GODZ specifically palmitoylates Cys-611, which leads to Golgi retention and decreased cell surface expression. In contrast, Cys-837 palmitoylation does not affect cell surface expression but regulates stimulation-dependent endocytosis. Post-translationally, phosphorylated at Ser-862 by PRKCG; phosphorylation increases plasma membrane-associated GRI4 expression.

The protein resides in the cell membrane. Its subcellular location is the postsynaptic cell membrane. The protein localises to the cell projection. It localises to the dendrite. The catalysed reaction is Ca(2+)(in) = Ca(2+)(out). The enzyme catalyses Na(+)(in) = Na(+)(out). It carries out the reaction Mg(2+)(in) = Mg(2+)(out). In terms of biological role, ionotropic glutamate receptor that functions as a ligand-gated cation channel, gated by L-glutamate and glutamatergic agonists such as alpha-amino-3-hydroxy-5-methyl-4-isoxazolepropionic acid (AMPA), quisqualic acid, and kainic acid. L-glutamate acts as an excitatory neurotransmitter at many synapses in the central nervous system and plays an important role in fast excitatory synaptic transmission. Binding of the excitatory neurotransmitter L-glutamate induces a conformation change, leading to the opening of the cation channel, and thereby converts the chemical signal to an electrical impulse upon entry of monovalent and divalent cations such as sodium and calcium. The receptor then desensitizes rapidly and enters a transient inactive state, characterized by the presence of bound agonist. In the presence of CACNG8, shows resensitization which is characterized by a delayed accumulation of current flux upon continued application of L-glutamate. This chain is Glutamate receptor 4, found in Macaca fascicularis (Crab-eating macaque).